The primary structure comprises 59 residues: UPF0434 protein Shew185_1670 (59 aa).

It belongs to the UPF0434 family.

The polypeptide is UPF0434 protein Shew185_1670 (Shewanella baltica (strain OS185)).